Consider the following 440-residue polypeptide: Enolase (440 aa).

Residue glutamine 168 participates in (2R)-2-phosphoglycerate binding. Glutamate 210 (proton donor) is an active-site residue. Residues aspartate 249, glutamate 300, and aspartate 326 each coordinate Mg(2+). (2R)-2-phosphoglycerate-binding residues include lysine 351, arginine 380, serine 381, and lysine 402. Residue lysine 351 is the Proton acceptor of the active site.

Belongs to the enolase family. It depends on Mg(2+) as a cofactor.

It is found in the cytoplasm. It localises to the secreted. The protein localises to the cell surface. It carries out the reaction (2R)-2-phosphoglycerate = phosphoenolpyruvate + H2O. It participates in carbohydrate degradation; glycolysis; pyruvate from D-glyceraldehyde 3-phosphate: step 4/5. Catalyzes the reversible conversion of 2-phosphoglycerate (2-PG) into phosphoenolpyruvate (PEP). It is essential for the degradation of carbohydrates via glycolysis. The protein is Enolase of Ureaplasma parvum serovar 3 (strain ATCC 27815 / 27 / NCTC 11736).